The primary structure comprises 351 residues: uncharacterized protein (351 aa).

Mn(2+)-binding residues include Asp-215, Asp-226, His-290, Glu-319, and Glu-333.

It belongs to the peptidase M24B family. Requires Mn(2+) as cofactor.

This is an uncharacterized protein from Staphylococcus aureus (strain MSSA476).